The sequence spans 379 residues: Fucose-specific lectin g276 (379 aa).

Glu-126 is a binding site for alpha-L-fucose. The beta-L-fucose site is built by Glu-126, Arg-163, and Trp-185. Alpha-L-fucose is bound by residues Trp-185, Arg-222, and Glu-234. Beta-L-fucose contacts are provided by Trp-242 and Glu-282. Position 289 (Trp-289) interacts with alpha-L-fucose.

This sequence belongs to the fungal fucose-specific lectin family.

Functionally, lectin that specifically binds to L-fucose. Is associated with the morphogenesis of the fungus, and plays a role in the formation of the constricting rings involved in nematode-trapping. The sequence is that of Fucose-specific lectin g276 from Arthrobotrys oligospora (strain ATCC 24927 / CBS 115.81 / DSM 1491) (Nematode-trapping fungus).